The sequence spans 87 residues: Large ribosomal subunit protein eL33 (87 aa).

The protein belongs to the eukaryotic ribosomal protein eL33 family.

The polypeptide is Large ribosomal subunit protein eL33 (Pyrococcus horikoshii (strain ATCC 700860 / DSM 12428 / JCM 9974 / NBRC 100139 / OT-3)).